Consider the following 595-residue polypeptide: MTDLTAQAACLTRDHLDDPVIGELRNRFGPDAFTVQATRTGVPVVWVKREQLLEVGDFLKKLPKPYVMLFDLHGMDERLRTHRHGLPAADFSVFYHLISIDRNRDIMLKVALSENDMRLPTFTKLFPNANWYERETWEMFGMTFDGHPHLTRLLMPPTWTGHPLRKDYPARATEFDPFELTKAKQDLEMEALTFKPEDWGMKRSTENEDFMFLNLGPNHPSSHGAFRIILQLDGEEIVDCVPDIGYHHRGAEKMGERQSWHSYIPYTDRIEYLGGCVNEMPYVLAVEKLAGITVPDRVNVIRVMLSELFRINSHLLYISTFIQDVGAMTPVFFAFTDRQKIYDVVEAITGFRMHPAWFRIGGVAHDLPRGWDKLLRDFLDWMPKRLDSYEKAALRNTILIARSKGVAAYGAKEALDWGCTGAALRATGIDFDVRKARPYSGYENFDFEVPVGGGVSDCYTRVMLKVEELRQSLRILEQCLNNMPEGPFKADHPLTTPPPKERTLQHIETLITHFLQVSWGPVMPANESFQMIEATKGINSYYLTSDGSTMSYRTRIRTPSFAHLQQIPVAVRGSLVSDLIVHLGSIDFVMSDVDR.

Residues 1-185 (MTDLTAQAAC…DPFELTKAKQ (185 aa)) are NADH dehydrogenase I subunit C. The NADH dehydrogenase I subunit D stretch occupies residues 209 to 595 (DFMFLNLGPN…IDFVMSDVDR (387 aa)).

In the N-terminal section; belongs to the complex I 30 kDa subunit family. This sequence in the C-terminal section; belongs to the complex I 49 kDa subunit family. As to quaternary structure, NDH-1 is composed of 13 different subunits. Subunits NuoB, CD, E, F, and G constitute the peripheral sector of the complex.

The protein resides in the cell inner membrane. The catalysed reaction is a quinone + NADH + 5 H(+)(in) = a quinol + NAD(+) + 4 H(+)(out). Its function is as follows. NDH-1 shuttles electrons from NADH, via FMN and iron-sulfur (Fe-S) centers, to quinones in the respiratory chain. The immediate electron acceptor for the enzyme in this species is believed to be ubiquinone. Couples the redox reaction to proton translocation (for every two electrons transferred, four hydrogen ions are translocated across the cytoplasmic membrane), and thus conserves the redox energy in a proton gradient. This is NADH-quinone oxidoreductase subunit C/D from Enterobacter sp. (strain 638).